The sequence spans 431 residues: Urokinase-type plasminogen activator (431 aa).

Residues 1–20 (MRALLARLLLCVLVVSDSKG) form the signal peptide. An EGF-like domain is found at 27–63 (VPSNCDCLNGGTCVSNKYFSNIHWCNCPKKFGGQHCE). 6 cysteine pairs are disulfide-bonded: Cys-31–Cys-39, Cys-33–Cys-51, Cys-53–Cys-62, Cys-70–Cys-151, Cys-91–Cys-133, and Cys-122–Cys-146. Positions 34 to 57 (LNGGTCVSNKYFSNIHWCNCPKKF) are binds urokinase plasminogen activator surface receptor. Positions 69–151 (TCYEGNGHFY…LVQECMVHDC (83 aa)) constitute a Kringle domain. Residues 152–178 (ADGKKPSSPPEELKFQCGQKTLRPRFK) form a connecting peptide region. Ser-158 is subject to Phosphoserine. 6 cysteine pairs are disulfide-bonded: Cys-168/Cys-299, Cys-209/Cys-225, Cys-217/Cys-288, Cys-313/Cys-382, Cys-345/Cys-361, and Cys-372/Cys-400. A Peptidase S1 domain is found at 179-424 (IVGGEFTTIE…FLPWIRSHTK (246 aa)). Residues His-224 and Asp-275 each act as charge relay system in the active site. Asn-322 is a glycosylation site (N-linked (GlcNAc...) asparagine). At Ser-323 the chain carries Phosphoserine. Residue Ser-376 is the Charge relay system of the active site.

This sequence belongs to the peptidase S1 family. As to quaternary structure, found in high and low molecular mass forms. Each consists of two chains, A and B. The high molecular mass form contains a long chain A which is cleaved to yield a short chain A. Forms heterodimer with SERPINA5. Binds LRP1B; binding is followed by internalization and degradation. Interacts with MRC2. Interacts with PLAUR. In complex with SERPINE1, interacts with PLAUR/uPAR. Interacts with SORL1 and LRP1, either alone or in complex with SERPINE1; these interactions are abolished in the presence of LRPAP1/RAP. The ternary complex composed of PLAUR-PLAU-PAI1 also interacts with SORLA. Phosphorylation of Ser-158 and Ser-323 abolishes proadhesive ability but does not interfere with receptor binding. Post-translationally, produced as an inactive single-chain protein (pro-uPA or sc-uPA), is processed into the active disulfide-linked two-chain form of PLAU/uPA by a proteolytic event mediated, at least, by TMPRSS4.

It localises to the secreted. The catalysed reaction is Specific cleavage of Arg-|-Val bond in plasminogen to form plasmin.. Its activity is regulated as follows. Inhibited by SERPINA5. Inhibited by SERPINE1. In terms of biological role, specifically cleaves the zymogen plasminogen to form the active enzyme plasmin. This is Urokinase-type plasminogen activator (PLAU) from Pongo abelii (Sumatran orangutan).